The sequence spans 480 residues: MSGHKCYSWELQDRFAQDKSVVNKMQQKYWETKQAFIKATGKKEDEHVVASDADLDAKLELFHSIQRTCLDLSKAIVLYQKRICFLSQEENELGKFLRSQGFQDKTRAGKMMQATGKALCFSSQQRLALRNPLCRFHQEVETFRHRAISDTWLTVNRMEQCRTEYRGALLWMKDVSQELDPDLYKQMEKFRKVQTQVRLAKKNFDKLKMDVCQKVDLLGASRCNLLSHMLATYQTTLLHFWEKTSHTMAAIHESFKGYQPYEFTTLKSLQDPMKKLVEKEKKKSSRRENREAVAQEPRQLISLEEENQHKESSTCQKEEGKSVPSSVDKSSADDACSGPIDELLDVKPEEACLGPMAGTPEPESGDKDDLLLLNEIFSTSSLDEGEFSREWAAVFGDDRLKEPAPMGAQGEPDPKPQIGSAFLPSQLLDQNMKDLQASLQEPAKAASDLTAWFSLFADLDPLSNPDAIGKTDKEHELLNA.

Residues 50–253 (ASDADLDAKL…TSHTMAAIHE (204 aa)) form the AH domain. Basic and acidic residues-rich tracts occupy residues 276–293 (LVEK…REAV) and 306–321 (ENQH…EEGK). Disordered regions lie at residues 276 to 338 (LVEK…ACSG) and 400 to 421 (LKEP…IGSA).

Its subcellular location is the cytoplasm. The protein localises to the cytosol. It is found in the golgi apparatus membrane. It localises to the cytoplasmic vesicle. The protein resides in the secretory vesicle membrane. Its subcellular location is the secretory vesicle. The protein localises to the synaptic vesicle membrane. In terms of biological role, may play a role in neurotransmitter secretion. The polypeptide is Islet cell autoantigen 1 (Rattus norvegicus (Rat)).